A 1238-amino-acid chain; its full sequence is Multifunctional 2-oxoglutarate metabolism enzyme (1238 aa).

The interval 1-41 (MANISSPFGQNEWLVEEMYRKFRDDPSSVDPSWHEFLVDYN) is 2-oxoglutarate dehydrogenase E1, N-terminal part. Residues 42–97 (PESTAEPVLTDPTSTDKQPSATPQAKPAAAADPVASRAKPATTPTVANGTAAGSAA) are linker. Residues 44 to 108 (STAEPVLTDP…PAKTTTTPPI (65 aa)) are disordered. The span at 59-107 (QPSATPQAKPAAAADPVASRAKPATTPTVANGTAAGSAAAPAKTTTTPP) shows a compositional bias: low complexity. The segment at 98–346 (APAKTTTTPP…LRTIHEMVLS (249 aa)) is succinyltransferase E2. His-325 (proton acceptor; for succinyltransferase activity) is an active-site residue. The interval 347–1238 (DSFWDEIFRE…QQEILDTAFG (892 aa)) is 2-oxoglutarate dehydrogenase E1, C-terminal part. Arg-551 lines the thiamine diphosphate pocket. Residues His-590 and Ser-615 each coordinate 2-oxoglutarate. 6 residues coordinate thiamine diphosphate: Ser-615, Leu-617, Asp-657, Ala-658, Ala-659, and Asn-690. Asp-657 provides a ligand contact to Mg(2+). Residues Asn-690 and Ile-692 each contribute to the Mg(2+) site. Positions 795 to 825 (DISLKEAEDALRDYQGQLERVFNEVRDLEKH) form a coiled coil. His-1032 serves as a coordination point for 2-oxoglutarate. The acetyl-CoA site is built by Thr-1050, Arg-1066, Lys-1101, Ser-1104, Gln-1154, Arg-1161, and Arg-1162.

This sequence belongs to the 2-oxoacid dehydrogenase family. Kgd subfamily. As to quaternary structure, homodimer. The 2-oxoglutarate dehydrogenase (ODH) complex contains multiple copies of three enzymatic components: 2-oxoglutarate dehydrogenase (E1), dihydrolipoamide succinyltransferase (E2) and lipoamide dehydrogenase (E3). The cofactor is Mg(2+). It depends on thiamine diphosphate as a cofactor.

It carries out the reaction glyoxylate + 2-oxoglutarate + H(+) = 2-hydroxy-3-oxoadipate + CO2. The enzyme catalyses 2-oxoglutarate + H(+) = succinate semialdehyde + CO2. The catalysed reaction is N(6)-[(R)-lipoyl]-L-lysyl-[protein] + 2-oxoglutarate + H(+) = N(6)-[(R)-S(8)-succinyldihydrolipoyl]-L-lysyl-[protein] + CO2. It catalyses the reaction N(6)-[(R)-dihydrolipoyl]-L-lysyl-[protein] + succinyl-CoA = N(6)-[(R)-S(8)-succinyldihydrolipoyl]-L-lysyl-[protein] + CoA. It functions in the pathway carbohydrate metabolism; tricarboxylic acid cycle; succinate from 2-oxoglutarate (transferase route): step 1/2. It participates in carbohydrate metabolism; tricarboxylic acid cycle; succinyl-CoA from 2-oxoglutarate (dehydrogenase route): step 1/1. Alpha-ketoglutarate dehydrogenase and decarboxylase activities are inhibited by unphosphorylated GarA, and allosterically activated by acetyl-CoA, the main substrate of the TCA cycle. In terms of biological role, shows three enzymatic activities that share a first common step, the attack of thiamine-PP on 2-oxoglutarate (alpha-ketoglutarate, KG), leading to the formation of an enamine-thiamine-PP intermediate upon decarboxylation. Thus, displays KGD activity, catalyzing the decarboxylation from five-carbon 2-oxoglutarate to four-carbon succinate semialdehyde (SSA). Also catalyzes C-C bond formation between the activated aldehyde formed after decarboxylation of alpha-ketoglutarate and the carbonyl of glyoxylate (GLX), to yield 2-hydroxy-3-oxoadipate (HOA), which spontaneously decarboxylates to form 5-hydroxylevulinate (HLA). And is also a component of the 2-oxoglutarate dehydrogenase (ODH) complex, that catalyzes the overall conversion of 2-oxoglutarate to succinyl-CoA and CO(2). The KG decarboxylase and KG dehydrogenase reactions provide two alternative, tightly regulated, pathways connecting the oxidative and reductive branches of the TCA cycle. The chain is Multifunctional 2-oxoglutarate metabolism enzyme (kgd) from Mycobacterium leprae (strain TN).